The following is a 203-amino-acid chain: ATP-dependent Clp protease proteolytic subunit (203 aa).

Ser107 functions as the Nucleophile in the catalytic mechanism. The active site involves His132.

This sequence belongs to the peptidase S14 family. As to quaternary structure, fourteen ClpP subunits assemble into 2 heptameric rings which stack back to back to give a disk-like structure with a central cavity, resembling the structure of eukaryotic proteasomes.

It localises to the cytoplasm. The enzyme catalyses Hydrolysis of proteins to small peptides in the presence of ATP and magnesium. alpha-casein is the usual test substrate. In the absence of ATP, only oligopeptides shorter than five residues are hydrolyzed (such as succinyl-Leu-Tyr-|-NHMec, and Leu-Tyr-Leu-|-Tyr-Trp, in which cleavage of the -Tyr-|-Leu- and -Tyr-|-Trp bonds also occurs).. Functionally, cleaves peptides in various proteins in a process that requires ATP hydrolysis. Has a chymotrypsin-like activity. Plays a major role in the degradation of misfolded proteins. This Shewanella piezotolerans (strain WP3 / JCM 13877) protein is ATP-dependent Clp protease proteolytic subunit.